The following is a 71-amino-acid chain: DNA-directed RNA polymerase subunit omega (71 aa).

The protein belongs to the RNA polymerase subunit omega family. As to quaternary structure, the RNAP catalytic core consists of 2 alpha, 1 beta, 1 beta' and 1 omega subunit. When a sigma factor is associated with the core the holoenzyme is formed, which can initiate transcription.

The catalysed reaction is RNA(n) + a ribonucleoside 5'-triphosphate = RNA(n+1) + diphosphate. In terms of biological role, promotes RNA polymerase assembly. Latches the N- and C-terminal regions of the beta' subunit thereby facilitating its interaction with the beta and alpha subunits. The polypeptide is DNA-directed RNA polymerase subunit omega (Campylobacter concisus (strain 13826)).